Reading from the N-terminus, the 172-residue chain is UPF0114 protein PMI3225 (172 aa).

Helical transmembrane passes span 15-35 (LFAPVYIGLSLGLLALTIKFF), 57-77 (LLSLIDLALVGGLLIMVIFSG), 108-128 (KVAASIVAISSIHLLGVFMDL), and 136-156 (LLWYVVLHLTFVFSAFVMGYL).

The protein belongs to the UPF0114 family.

Its subcellular location is the cell membrane. This chain is UPF0114 protein PMI3225, found in Proteus mirabilis (strain HI4320).